The following is a 358-amino-acid chain: UPF0421 protein BT9727_2513 (358 aa).

The next 4 helical transmembrane spans lie at 19–39 (IAVF…IFAV), 74–94 (FTFF…FTIV), 109–129 (TLTA…AFLI), and 131–151 (LATT…ILPP).

It belongs to the UPF0421 family.

It is found in the cell membrane. In Bacillus thuringiensis subsp. konkukian (strain 97-27), this protein is UPF0421 protein BT9727_2513.